The primary structure comprises 304 residues: PTB domain-containing engulfment adapter protein 1 (304 aa).

Threonine 16 carries the phosphothreonine modification. In terms of domain architecture, PID spans 21–176 (SKHFIPYNAK…AGLQKRIQDL (156 aa)). Residues 158–202 (KDVETRKQIAGLQKRIQDLETENMELKNKVQDLENQLRITQVSAP) adopt a coiled-coil conformation. Serine 223 is modified (phosphoserine). The interval 223 to 246 (SPISHQSSMPTRNGTQPPPVPSRS) is disordered. Polar residues predominate over residues 225 to 237 (ISHQSSMPTRNGT).

This sequence belongs to the ced-6 family. Homodimer. Interacts with clathrin. Interacts with GDP-bound ARF6, but not with GTP-bound ARF6. Part of a complex composed of GULP1, ACAP1 and ARF6. Interacts with ACAP1, LRP1, MEGF10 and STAB2. In terms of tissue distribution, widely expressed. Detected in macrophages, pancreas, kidney, skeletal muscle, heart, colon, intestine, lung, placenta and ovary.

It is found in the cytoplasm. Functionally, may function as an adapter protein. Required for efficient phagocytosis of apoptotic cells. Modulates cellular glycosphingolipid and cholesterol transport. May play a role in the internalization and endosomal trafficking of various LRP1 ligands, such as PSAP. Increases cellular levels of GTP-bound ARF6. In Homo sapiens (Human), this protein is PTB domain-containing engulfment adapter protein 1 (GULP1).